The primary structure comprises 544 residues: Chaperonin GroEL 1 (544 aa).

Residues 29–32 (TLGP), 86–90 (DGTTT), Gly413, and Asp495 each bind ATP.

Belongs to the chaperonin (HSP60) family. Forms a cylinder of 14 subunits composed of two heptameric rings stacked back-to-back. Interacts with the co-chaperonin GroES.

The protein localises to the cytoplasm. It carries out the reaction ATP + H2O + a folded polypeptide = ADP + phosphate + an unfolded polypeptide.. Its function is as follows. Together with its co-chaperonin GroES, plays an essential role in assisting protein folding. The GroEL-GroES system forms a nano-cage that allows encapsulation of the non-native substrate proteins and provides a physical environment optimized to promote and accelerate protein folding. This chain is Chaperonin GroEL 1, found in Synechococcus sp. (strain ATCC 27144 / PCC 6301 / SAUG 1402/1) (Anacystis nidulans).